The following is a 158-amino-acid chain: Phospholipase A2 AP-PLA2-II (158 aa).

The N-terminal stretch at 1-16 (MKTFLILAMAVALAKA) is a signal peptide. Residues 17–23 (QSTDEIT) constitute a propeptide that is removed on maturation. Cystine bridges form between C51/C158, C53/C69, C68/C138, C75/C131, C85/C124, and C109/C129. The Ca(2+) site is built by G54 and G56. Residue H72 is part of the active site. Residue D73 participates in Ca(2+) binding. D132 is an active-site residue.

The protein belongs to the phospholipase A2 family. Group I subfamily. In terms of assembly, monomer. The cofactor is Ca(2+). Expressed by the venom gland.

The protein localises to the secreted. It catalyses the reaction a 1,2-diacyl-sn-glycero-3-phosphocholine + H2O = a 1-acyl-sn-glycero-3-phosphocholine + a fatty acid + H(+). Starfish phospholipase A2 (PLA2) that has hemorrhagic and capillary permeability-increasing activities and hence is considered to be deeply involved in the local inflammation. Shows hemolytic activity only in the presence of phosphatidylcholine (PC). PLA2 catalyzes the calcium-dependent hydrolysis of the 2-acyl groups in 3-sn-phosphoglycerides. This is Phospholipase A2 AP-PLA2-II from Acanthaster planci (Crown-of-thorns starfish).